The sequence spans 174 residues: RNA pyrophosphohydrolase (174 aa).

The region spanning 14–167 (PYRPCVGLMV…KRKVYEEVVA (154 aa)) is the Nudix hydrolase domain. The Nudix box motif lies at 55-76 (GGIDKGEEPLEAAIRELYEETG).

The protein belongs to the Nudix hydrolase family. RppH subfamily. Requires a divalent metal cation as cofactor.

In terms of biological role, accelerates the degradation of transcripts by removing pyrophosphate from the 5'-end of triphosphorylated RNA, leading to a more labile monophosphorylated state that can stimulate subsequent ribonuclease cleavage. The polypeptide is RNA pyrophosphohydrolase (Brucella anthropi (strain ATCC 49188 / DSM 6882 / CCUG 24695 / JCM 21032 / LMG 3331 / NBRC 15819 / NCTC 12168 / Alc 37) (Ochrobactrum anthropi)).